A 228-amino-acid polypeptide reads, in one-letter code: Probable ribosomal RNA small subunit methyltransferase A (228 aa).

Positions 9, 11, 34, 55, 78, and 93 each coordinate S-adenosyl-L-methionine.

This sequence belongs to the class I-like SAM-binding methyltransferase superfamily. rRNA adenine N(6)-methyltransferase family. RsmA subfamily.

It localises to the cytoplasm. In terms of biological role, specifically dimethylates two adjacent adenosines in the loop of a conserved hairpin near the 3'-end of 16S rRNA in the 30S particle. May play a critical role in biogenesis of 30S subunits. The sequence is that of Probable ribosomal RNA small subunit methyltransferase A from Pyrobaculum aerophilum (strain ATCC 51768 / DSM 7523 / JCM 9630 / CIP 104966 / NBRC 100827 / IM2).